The sequence spans 426 residues: Glutamate-1-semialdehyde 2,1-aminomutase (426 aa).

N6-(pyridoxal phosphate)lysine is present on Lys265.

It belongs to the class-III pyridoxal-phosphate-dependent aminotransferase family. HemL subfamily. In terms of assembly, homodimer. The cofactor is pyridoxal 5'-phosphate.

It localises to the cytoplasm. The catalysed reaction is (S)-4-amino-5-oxopentanoate = 5-aminolevulinate. It functions in the pathway porphyrin-containing compound metabolism; protoporphyrin-IX biosynthesis; 5-aminolevulinate from L-glutamyl-tRNA(Glu): step 2/2. The protein is Glutamate-1-semialdehyde 2,1-aminomutase of Neisseria gonorrhoeae (strain ATCC 700825 / FA 1090).